The following is a 272-amino-acid chain: Dihydropteroate synthase (272 aa).

One can recognise a Pterin-binding domain in the interval 1–251 (MIKTKIMGIL…GVRVHNVLLN (251 aa)). Residue Asn11 coordinates Mg(2+). (7,8-dihydropterin-6-yl)methyl diphosphate-binding positions include Thr51, Asp89, Asn108, Asp172, Lys208, and 244–246 (RVH).

It belongs to the DHPS family. In terms of assembly, homodimer. Mg(2+) is required as a cofactor.

The enzyme catalyses (7,8-dihydropterin-6-yl)methyl diphosphate + 4-aminobenzoate = 7,8-dihydropteroate + diphosphate. Its pathway is cofactor biosynthesis; tetrahydrofolate biosynthesis; 7,8-dihydrofolate from 2-amino-4-hydroxy-6-hydroxymethyl-7,8-dihydropteridine diphosphate and 4-aminobenzoate: step 1/2. Functionally, catalyzes the condensation of para-aminobenzoate (pABA) with 6-hydroxymethyl-7,8-dihydropterin diphosphate (DHPt-PP) to form 7,8-dihydropteroate (H2Pte), the immediate precursor of folate derivatives. This Staphylococcus epidermidis (strain ATCC 35984 / DSM 28319 / BCRC 17069 / CCUG 31568 / BM 3577 / RP62A) protein is Dihydropteroate synthase (folP).